Reading from the N-terminus, the 86-residue chain is Large ribosomal subunit protein bL27 (86 aa).

The segment covering 1-10 has biased composition (gly residues); the sequence is MAQKKGGGST. The interval 1 to 21 is disordered; that stretch reads MAQKKGGGSTRNGRDSESKRL.

It belongs to the bacterial ribosomal protein bL27 family.

In Ralstonia pickettii (strain 12J), this protein is Large ribosomal subunit protein bL27.